The following is a 528-amino-acid chain: Equilibrative nucleoside transporter 4 (528 aa).

The Extracellular portion of the chain corresponds to Met-1–His-68. Residues Ala-69–Ile-89 form a helical membrane-spanning segment. The Cytoplasmic portion of the chain corresponds to Thr-90–Gly-101. The chain crosses the membrane as a helical span at residues Thr-102–Leu-122. The Extracellular segment spans residues Asn-123–Gly-139. The chain crosses the membrane as a helical span at residues Tyr-140–Phe-160. Over Ser-161–Tyr-166 the chain is Cytoplasmic. A helical transmembrane segment spans residues Ala-167 to Phe-187. The Extracellular portion of the chain corresponds to Tyr-188 to Thr-231. The chain crosses the membrane as a helical span at residues Ile-232–Val-252. At Arg-253–Arg-346 the chain is on the cytoplasmic side. A helical transmembrane segment spans residues Val-347–Pro-367. The Extracellular portion of the chain corresponds to Gly-368–Cys-376. The helical transmembrane segment at Val-377–Gly-397 threads the bilayer. The Cytoplasmic portion of the chain corresponds to Lys-398–His-411. Residues Leu-412 to Pro-432 traverse the membrane as a helical segment. The Extracellular portion of the chain corresponds to Ser-433–Cys-445. Residues Val-446 to Ala-466 form a helical membrane-spanning segment. The Cytoplasmic portion of the chain corresponds to Ala-467–Thr-481. A helical membrane pass occupies residues Met-482 to Thr-504. Residues Arg-505–Pro-528 lie on the Extracellular side of the membrane. Asn-521 carries N-linked (GlcNAc...) asparagine glycosylation.

It belongs to the SLC29A/ENT transporter (TC 2.A.57) family. In terms of processing, N-glycosylated. In terms of tissue distribution, expressed in heart. Expressed in choroid plexus.

The protein localises to the cell membrane. It localises to the apical cell membrane. It catalyses the reaction serotonin(out) = serotonin(in). It carries out the reaction dopamine(out) = dopamine(in). The enzyme catalyses (R)-noradrenaline(out) = (R)-noradrenaline(in). The catalysed reaction is (R)-adrenaline(out) = (R)-adrenaline(in). It catalyses the reaction histamine(out) = histamine(in). It carries out the reaction tyramine(in) = tyramine(out). The enzyme catalyses guanidine(out) = guanidine(in). The catalysed reaction is adenine(out) = adenine(in). It catalyses the reaction adenosine(in) = adenosine(out). Its activity is regulated as follows. Activated at acidic pH. Its function is as follows. Electrogenic voltage-dependent transporter that mediates the transport of a variety of endogenous bioactive amines, cationic xenobiotics and drugs. Utilizes the physiologic inside-negative membrane potential as a driving force to facilitate cellular uptake of organic cations. Functions as a Na(+)- and Cl(-)-independent bidirectional transporter. Substrate transport is pH-dependent and enhanced under acidic condition, which is most likely the result of allosteric changes in the transporter structure. Implicated in monoamine neurotransmitters uptake such as serotonin, dopamine, adrenaline/epinephrine, noradrenaline/norepinephrine, histamine and tyramine, thereby supporting a role in homeostatic regulation of aminergic neurotransmission in the central nervous system. Also responsible for the uptake of bioactive amines and drugs through the blood-cerebrospinal fluid (CSF) barrier, from the CSF into choroid plexus epithelial cells, thereby playing a significant role in the clearance of cationic neurotoxins, xenobiotics and metabolic waste in the brain. Involved in bidirectional transport of the purine nucleoside adenosine and plays a role in the regulation of extracellular adenosine concentrations in cardiac tissues, in particular during ischemia. May be involved in organic cation uptake from the tubular lumen into renal tubular cells, thereby contributing to organic cation reabsorption in the kidney. Also transports adenine and guanidine. In Mus musculus (Mouse), this protein is Equilibrative nucleoside transporter 4.